The primary structure comprises 215 residues: Phosphatidylserine decarboxylase proenzyme (215 aa).

Serine 185 serves as the catalytic Schiff-base intermediate with substrate; via pyruvic acid. At serine 185 the chain carries Pyruvic acid (Ser); by autocatalysis.

It belongs to the phosphatidylserine decarboxylase family. PSD-A subfamily. Heterodimer of a large membrane-associated beta subunit and a small pyruvoyl-containing alpha subunit. Requires pyruvate as cofactor. In terms of processing, is synthesized initially as an inactive proenzyme. Formation of the active enzyme involves a self-maturation process in which the active site pyruvoyl group is generated from an internal serine residue via an autocatalytic post-translational modification. Two non-identical subunits are generated from the proenzyme in this reaction, and the pyruvate is formed at the N-terminus of the alpha chain, which is derived from the carboxyl end of the proenzyme. The post-translation cleavage follows an unusual pathway, termed non-hydrolytic serinolysis, in which the side chain hydroxyl group of the serine supplies its oxygen atom to form the C-terminus of the beta chain, while the remainder of the serine residue undergoes an oxidative deamination to produce ammonia and the pyruvoyl prosthetic group on the alpha chain.

It is found in the cell membrane. The enzyme catalyses a 1,2-diacyl-sn-glycero-3-phospho-L-serine + H(+) = a 1,2-diacyl-sn-glycero-3-phosphoethanolamine + CO2. It functions in the pathway phospholipid metabolism; phosphatidylethanolamine biosynthesis; phosphatidylethanolamine from CDP-diacylglycerol: step 2/2. Its function is as follows. Catalyzes the formation of phosphatidylethanolamine (PtdEtn) from phosphatidylserine (PtdSer). The sequence is that of Phosphatidylserine decarboxylase proenzyme from Streptomyces griseus subsp. griseus (strain JCM 4626 / CBS 651.72 / NBRC 13350 / KCC S-0626 / ISP 5235).